Reading from the N-terminus, the 118-residue chain is MNPEEIRQRRLQEMQAKAQEQGAQDPEAQRQMQEQQMQYEMQKQKILRQILSEEARSRLARIKLAKPQFAEQVEMQLIQLAQAGKLPIPLTDEYFKGLLDRIYEMNKPAKKEITIMRR.

Over residues 1 to 12 (MNPEEIRQRRLQ) the composition is skewed to basic and acidic residues. Residues 1–33 (MNPEEIRQRRLQEMQAKAQEQGAQDPEAQRQMQ) form a disordered region. The span at 24–33 (QDPEAQRQMQ) shows a compositional bias: low complexity.

This sequence belongs to the PDCD5 family.

This is DNA-binding protein MmarC6_0793 from Methanococcus maripaludis (strain C6 / ATCC BAA-1332).